The primary structure comprises 54 residues: MSPQTETKASVGFKAGVKEYKLTYYTPDYETKDTDILAAFRVTPQPGVPPEEAG.

Positions 1–2 (MS) are excised as a propeptide. An N-acetylproline modification is found at proline 3. Residue lysine 14 is modified to N6,N6,N6-trimethyllysine.

The protein belongs to the RuBisCO large chain family. Type I subfamily. As to quaternary structure, heterohexadecamer of 8 large chains and 8 small chains.

It localises to the plastid. The protein localises to the chloroplast. It carries out the reaction 2 (2R)-3-phosphoglycerate + 2 H(+) = D-ribulose 1,5-bisphosphate + CO2 + H2O. It catalyses the reaction D-ribulose 1,5-bisphosphate + O2 = 2-phosphoglycolate + (2R)-3-phosphoglycerate + 2 H(+). Its function is as follows. RuBisCO catalyzes two reactions: the carboxylation of D-ribulose 1,5-bisphosphate, the primary event in carbon dioxide fixation, as well as the oxidative fragmentation of the pentose substrate in the photorespiration process. Both reactions occur simultaneously and in competition at the same active site. In Geum borisii (Avens), this protein is Ribulose bisphosphate carboxylase large chain (rbcL).